The sequence spans 369 residues: uncharacterized protein (369 aa).

The next 9 membrane-spanning stretches (helical) occupy residues 25-45 (QFVA…WYDW), 47-67 (FCLL…FVPA), 119-139 (LNIV…FNLM), 152-172 (LSGF…FSAL), 206-226 (HALN…LLFV), 235-255 (LKPL…SLYL), 272-292 (PIAL…GVFG), 296-316 (FGIY…TVFL), and 323-343 (LIFF…FTVA).

This sequence to B.subtilis ComEC.

The protein localises to the cell membrane. This is an uncharacterized protein from Mycoplasma genitalium (strain ATCC 33530 / DSM 19775 / NCTC 10195 / G37) (Mycoplasmoides genitalium).